The sequence spans 293 residues: Elongation factor Ts (293 aa).

Residues 80-83 form an involved in Mg(2+) ion dislocation from EF-Tu region; it reads TDFV.

This sequence belongs to the EF-Ts family.

The protein resides in the cytoplasm. Functionally, associates with the EF-Tu.GDP complex and induces the exchange of GDP to GTP. It remains bound to the aminoacyl-tRNA.EF-Tu.GTP complex up to the GTP hydrolysis stage on the ribosome. This chain is Elongation factor Ts, found in Burkholderia thailandensis (strain ATCC 700388 / DSM 13276 / CCUG 48851 / CIP 106301 / E264).